A 264-amino-acid chain; its full sequence is Matrilysin (264 aa).

A signal peptide spans 1 to 17 (MQLTLFCFVCLLPGHLA). Residues 18–94 (LPLSQEAGDV…PRCGVPDVAE (77 aa)) constitute a propeptide, activation peptide. The short motif at 85 to 92 (PRCGVPDV) is the Cysteine switch element. Cys87 is a binding site for Zn(2+). Position 153 (Asp153) interacts with Ca(2+). Zn(2+) contacts are provided by His163 and Asp165. Ca(2+) contacts are provided by Asp170, Gly171, Gly173, and Thr175. A Zn(2+)-binding site is contributed by His178. Ca(2+) contacts are provided by Gly185, Gly187, and Asp189. His191 serves as a coordination point for Zn(2+). Residues Asp193 and Glu196 each coordinate Ca(2+). His214 lines the Zn(2+) pocket. Glu215 is a catalytic residue. Zn(2+) is bound by residues His218 and His224.

It belongs to the peptidase M10A family. Ca(2+) is required as a cofactor. The cofactor is Zn(2+). Expressed in the intestinal epithelium (at protein level).

The protein localises to the secreted. It is found in the extracellular space. Its subcellular location is the extracellular matrix. The enzyme catalyses Cleavage of 14-Ala-|-Leu-15 and 16-Tyr-|-Leu-17 in B chain of insulin. No action on collagen types I, II, IV, V. Cleaves gelatin chain alpha2(I) &gt; alpha1(I).. Its function is as follows. Degrades casein, gelatins of types I, III, IV, and V, and fibronectin. Activates procollagenase. May play a role in tissue reorganization. The protein is Matrilysin (Mmp7) of Mus musculus (Mouse).